Here is a 215-residue protein sequence, read N- to C-terminus: MTDSSPQSNPNAVPGAADVPAAAEGQQQEQRRGGGRGERGDRRGGRRGDRRNQERDSEWQERVVQIRRVSKTVKGGKKMSFRAIVVVGNEKGQVGVGVGKAGDVIGAVRKGVADGKKHLVKVPLTRHNSIPTLSNGRDGAASVLIRPAAPGTGVIAGGSIRTVLELAGIKNVLAKRLGSKTPLNNARAAMVALSLLRTHKETAKERGISLEQIYS.

The interval 1–62 is disordered; that stretch reads MTDSSPQSNP…QERDSEWQER (62 aa). Positions 9–28 are enriched in low complexity; the sequence is NPNAVPGAADVPAAAEGQQQ. The segment covering 29 to 61 has biased composition (basic and acidic residues); the sequence is EQRRGGGRGERGDRRGGRRGDRRNQERDSEWQE. Residues 59–122 enclose the S5 DRBM domain; that stretch reads WQERVVQIRR…ADGKKHLVKV (64 aa).

The protein belongs to the universal ribosomal protein uS5 family. As to quaternary structure, part of the 30S ribosomal subunit. Contacts proteins S4 and S8.

Its function is as follows. With S4 and S12 plays an important role in translational accuracy. Functionally, located at the back of the 30S subunit body where it stabilizes the conformation of the head with respect to the body. The protein is Small ribosomal subunit protein uS5 of Parasynechococcus marenigrum (strain WH8102).